Reading from the N-terminus, the 241-residue chain is uncharacterized protein (241 aa).

S-adenosyl-L-methionine-binding positions include 78–80 (TSA), Gly-111, Ile-131, and 138–140 (SSL).

It belongs to the class IV-like SAM-binding methyltransferase superfamily. RNA methyltransferase TrmH family.

This is an uncharacterized protein from Haemophilus influenzae (strain ATCC 51907 / DSM 11121 / KW20 / Rd).